Here is a 285-residue protein sequence, read N- to C-terminus: uncharacterized protein (285 aa).

Disordered stretches follow at residues 115 to 139 (AAGK…QERN) and 152 to 183 (EHDV…NRGV). Basic and acidic residues-rich tracts occupy residues 128-138 (KEADVQTKQER) and 152-170 (EHDV…DLKT).

This is an uncharacterized protein from Escherichia coli (strain K12).